The primary structure comprises 264 residues: Probable DNA polymerase sliding clamp 2 (264 aa).

A DNA-binding region spans residues 75–94 (SIAQEATVGIKISNFVRILD).

This sequence belongs to the PCNA family.

Its function is as follows. Sliding clamp subunit. Responsible for tethering the catalytic subunit of DNA polymerase to DNA during high-speed replication. This chain is Probable DNA polymerase sliding clamp 2, found in Paramecium bursaria Chlorella virus 1 (PBCV-1).